A 147-amino-acid chain; its full sequence is Large ribosomal subunit protein uL15 (147 aa).

A disordered region spans residues 1-54 (MKLFELQPAPGSKKLPNRKGRGIGSGNGKTGGRGHKGQNARAGGGVRPGFEGGQ). 2 stretches are compositionally biased toward gly residues: residues 22 to 31 (GIGSGNGKTG) and 42 to 52 (AGGGVRPGFEG).

The protein belongs to the universal ribosomal protein uL15 family. In terms of assembly, part of the 50S ribosomal subunit.

Binds to the 23S rRNA. The protein is Large ribosomal subunit protein uL15 of Ruminiclostridium cellulolyticum (strain ATCC 35319 / DSM 5812 / JCM 6584 / H10) (Clostridium cellulolyticum).